The primary structure comprises 202 residues: 3-isopropylmalate dehydratase small subunit 1 (202 aa).

This sequence belongs to the LeuD family. LeuD type 1 subfamily. Heterodimer of LeuC and LeuD.

The catalysed reaction is (2R,3S)-3-isopropylmalate = (2S)-2-isopropylmalate. The protein operates within amino-acid biosynthesis; L-leucine biosynthesis; L-leucine from 3-methyl-2-oxobutanoate: step 2/4. Catalyzes the isomerization between 2-isopropylmalate and 3-isopropylmalate, via the formation of 2-isopropylmaleate. The chain is 3-isopropylmalate dehydratase small subunit 1 from Mannheimia succiniciproducens (strain KCTC 0769BP / MBEL55E).